Here is a 142-residue protein sequence, read N- to C-terminus: Alpha-lactalbumin (142 aa).

A signal peptide spans 1 to 19 (MRFFVPLFLVGILFPAILA). Residues 20–142 (KQFTKCELSQ…KLEQWLCEKL (123 aa)) enclose the C-type lysozyme domain. Disulfide bonds link C25-C139, C47-C130, C80-C96, and C92-C110. Ca(2+) contacts are provided by T57 and Q58. An N-linked (GlcNAc...) asparagine glycan is attached at N64. Zn(2+) is bound at residue E68. N-linked (GlcNAc...) asparagine; atypical; partial glycosylation occurs at N90. Ca(2+)-binding residues include K98, L100, D101, D102, D103, D106, and D107. E135 is a Zn(2+) binding site.

Belongs to the glycosyl hydrolase 22 family. Lactose synthase (LS) is a heterodimer of a catalytic component, beta1,4-galactosyltransferase (beta4Gal-T1) and a regulatory component, alpha-lactalbumin (LA). In terms of tissue distribution, mammary gland specific. Secreted in milk.

Its subcellular location is the secreted. Regulatory subunit of lactose synthase, changes the substrate specificity of galactosyltransferase in the mammary gland making glucose a good acceptor substrate for this enzyme. This enables LS to synthesize lactose, the major carbohydrate component of milk. In other tissues, galactosyltransferase transfers galactose onto the N-acetylglucosamine of the oligosaccharide chains in glycoproteins. The sequence is that of Alpha-lactalbumin (LALBA) from Homo sapiens (Human).